A 54-amino-acid chain; its full sequence is Large ribosomal subunit protein bL33A (54 aa).

This sequence belongs to the bacterial ribosomal protein bL33 family.

The polypeptide is Large ribosomal subunit protein bL33A (Mycolicibacterium gilvum (strain PYR-GCK) (Mycobacterium gilvum (strain PYR-GCK))).